The sequence spans 2453 residues: Nuclear receptor corepressor 1 (2453 aa).

Positions 1–29 (MSSSGYPPNQGAFSTEQSRYPSHSVQYTF) are enriched in polar residues. Disordered regions lie at residues 1–116 (MSSS…QVSD), 147–177 (PAFG…SKLS), and 206–231 (QQQL…VEQK). The segment at 1–373 (MSSSGYPPNQ…QRGAGLSATI (373 aa)) is interaction with ZBTB33 and HEXIM1. The segment covering 51–64 (SQASQLLQQQQQQQ) has biased composition (low complexity). 2 stretches are compositionally biased toward basic and acidic residues: residues 77 to 88 (PGSDRPQERRSG) and 99 to 116 (VDHD…QVSD). Residue S172 is modified to Phosphoserine. Residues 174-216 (SKLSKEELIQSMDRVDREIAKVEQQILKLKKKQQQLEEEAAKP) adopt a coiled-coil conformation. The segment covering 212–221 (EAAKPPEPEK) has biased composition (basic and acidic residues). S224 carries the post-translational modification Phosphoserine. The interaction with SIN3A/B stretch occupies residues 254-312 (FEGLGPKVELPLYNQPSDTKVYHENIKTNQVMRKKLILFFKRRNHARKQREQKICQRYD). A coiled-coil region spans residues 299–328 (ARKQREQKICQRYDQLMEAWEKKVDRIENN). An SANT 1 domain is found at 435-486 (QFMNVWTDHEKEIFKDKFIQHPKNFGLIASYLERKSVPDCVLYYYLTKKNEN). Disordered stretches follow at residues 497 to 631 (KRRG…TEEE) and 677 to 908 (LLQQ…PERQ). A coiled-coil region spans residues 501–550 (RNQQIARPSQEEKVEEKEEDKAEKTEKKEEEKKDDEEKDDKEDSKETTKE). Basic and acidic residues-rich tracts occupy residues 509–531 (SQEE…KEEE) and 541–556 (KEDS…RTEA). A compositionally biased stretch (low complexity) spans 592–604 (EAAAANAAAAATE). Positions 605–616 (EPPPPLPPPPEP) are enriched in pro residues. One can recognise an SANT 2 domain in the interval 622–673 (VETSRWTEEEMEVAKKGLVEHGRNWAAIAKMVGTKSEAQCKNFYFNYKRRHN). Polar residues predominate over residues 697–707 (QCESVASTVSA). Residues 708–727 (QEDEDIEASNEEENPEDSEG) are compositionally biased toward acidic residues. The span at 771-787 (TTDPAPCASPSSAVPTT) shows a compositional bias: low complexity. Over residues 851–885 (GEGDAKERDLESTSEKTEARDEDVVVAEQIERPEP) the composition is skewed to basic and acidic residues. S1011 bears the Phosphoserine mark. The interval 1034–1058 (VRLPTTRPTRPPPPLIPSSKTTVAS) is disordered. A Glycyl lysine isopeptide (Lys-Gly) (interchain with G-Cter in SUMO1); alternate cross-link involves residue K1117. K1117 is covalently cross-linked (Glycyl lysine isopeptide (Lys-Gly) (interchain with G-Cter in SUMO2); alternate). Position 1122 is a phosphoserine (S1122). Residue K1195 forms a Glycyl lysine isopeptide (Lys-Gly) (interchain with G-Cter in SUMO2) linkage. Phosphoserine is present on residues S1206, S1207, S1274, S1292, and S1333. An N6-acetyllysine modification is found at K1347. T1378 is modified (phosphothreonine). Residue K1400 forms a Glycyl lysine isopeptide (Lys-Gly) (interchain with G-Cter in SUMO2) linkage. K1423 participates in a covalent cross-link: Glycyl lysine isopeptide (Lys-Gly) (interchain with G-Cter in SUMO2); alternate. N6-acetyllysine; alternate is present on K1423. The interval 1450–1544 (GEPVRARHTS…SIPAKSPVPG (95 aa)) is disordered. 2 positions are modified to phosphoserine: S1459 and S1481. Polar residues predominate over residues 1459 to 1469 (SVVSSGPSVLR). Residues 1495 to 1514 (VSYQNTISRGSPMMNRTSDV) show a composition bias toward polar residues. An interaction with C1D region spans residues 1510–2453 (RTSDVSSSKS…QYETLSDSDD (944 aa)). K1525 participates in a covalent cross-link: Glycyl lysine isopeptide (Lys-Gly) (interchain with G-Cter in SUMO2). Residue S1598 is modified to Phosphoserine. Disordered stretches follow at residues 1697-1780 (RPYN…VRTQ) and 1902-1939 (ALPS…RTRG). Composition is skewed to basic and acidic residues over residues 1718–1745 (AERE…RERI) and 1919–1937 (AGKD…ELRT). A CORNR box 1 motif is present at residues 1949 to 1953 (IDVII). A disordered region spans residues 1959–2060 (SDKDARERGS…SSQSEGMGQV (102 aa)). A compositionally biased stretch (low complexity) spans 1968–1979 (SQSSDSSSSLSS). Residues S1993 and S1997 each carry the phosphoserine modification. An ID1 region spans residues 2050-2129 (PSSQSEGMGQ…QSQTVLHPRP (80 aa)). A required for interaction with RARA in the absence of its ligand region spans residues 2065–2068 (RLIT). The short motif at 2073-2077 (ICQII) is the CORNR box 2 element. Over residues 2088-2124 (SQASTSTFQTSPSALSSTPVRTKTSSRYSPESQSQTV) the composition is skewed to polar residues. A disordered region spans residues 2088 to 2174 (SQASTSTFQT…SPPQGPAVHE (87 aa)). Residues S2116, S2134, S2150, S2165, and S2198 each carry the phosphoserine modification. Residues 2138–2156 (LVDKSRGSRPGKSPERSHI) are compositionally biased toward basic and acidic residues. Residues 2226–2287 (IFRKLNSSGG…EDIIRKALMG (62 aa)) form an ID2 region. Residues 2277–2281 (LEDII) carry the CORNR box 3 motif. The segment at 2303–2396 (PVGIMPGSAS…RPSSTGSTQF (94 aa)) is disordered. Over residues 2310–2319 (SASTSVVTSS) the composition is skewed to low complexity. Position 2412 is a phosphothreonine (T2412). S2449 and S2451 each carry phosphoserine.

The protein belongs to the N-CoR nuclear receptor corepressors family. As to quaternary structure, forms a large corepressor complex that contains SIN3A/B and histone deacetylases HDAC1 and HDAC2. This complex associates with the thyroid receptor (TR) and the retinoid acid receptor (RAR) in the absence of ligand. Interacts directly with RARA; the interaction is facilitated with RARA trimethylation. Component of the N-Cor repressor complex, at least composed of CBFA2T3, HEXIM1, NCOR1, NCOR2, HDAC3, TBL1X, TBL1XR1, CORO2A and GPS2. Interacts with ZBTB33; the interaction serves to recruit the N-CoR complex to promoter regions containing methylated CpG dinucleotides. Interacts with TRIM28 and KDM3A. Interacts (via the RD1 domain) with BAZ1A (via its N-terminal); the interaction corepresses a number of NCOR1-regulated genes. Interacts with BCL6, C1D, DACH1, HEXIM1, HDAC7, RORA, RORC, SAP30, SIAH2, SIN3A and SIN3B. May interact with DEAF1. Interacts with RXRA. Interacts with SETD5. Interacts with VDR. Interacts with ZBTB7A. Interacts with AR. Interacts with HDAC3. Ubiquitinated; mediated by SIAH2 and leading to its subsequent proteasomal degradation. In terms of tissue distribution, ubiquitous.

It is found in the nucleus. In terms of biological role, mediates transcriptional repression by certain nuclear receptors. Part of a complex which promotes histone deacetylation and the formation of repressive chromatin structures which may impede the access of basal transcription factors. Participates in the transcriptional repressor activity produced by BCL6. Recruited by ZBTB7A to the androgen response elements/ARE on target genes, negatively regulates androgen receptor signaling and androgen-induced cell proliferation. Mediates the NR1D1-dependent repression and circadian regulation of TSHB expression. The NCOR1-HDAC3 complex regulates the circadian expression of the core clock gene ARTNL/BMAL1 and the genes involved in lipid metabolism in the liver. In Mus musculus (Mouse), this protein is Nuclear receptor corepressor 1 (Ncor1).